A 162-amino-acid chain; its full sequence is Transcription elongation factor GreB (162 aa).

Residues 52-73 (KKLLREIDRRVRYLRKRLEDVK) are a coiled coil.

This sequence belongs to the GreA/GreB family. GreB subfamily.

Functionally, necessary for efficient RNA polymerase transcription elongation past template-encoded arresting sites. The arresting sites in DNA have the property of trapping a certain fraction of elongating RNA polymerases that pass through, resulting in locked ternary complexes. Cleavage of the nascent transcript by cleavage factors such as GreA or GreB allows the resumption of elongation from the new 3'terminus. GreB releases sequences of up to 9 nucleotides in length. This chain is Transcription elongation factor GreB, found in Pseudomonas putida (strain ATCC 47054 / DSM 6125 / CFBP 8728 / NCIMB 11950 / KT2440).